Reading from the N-terminus, the 156-residue chain is Small ribosomal subunit protein uS7 (156 aa).

This sequence belongs to the universal ribosomal protein uS7 family. As to quaternary structure, part of the 30S ribosomal subunit. Contacts proteins S9 and S11.

Functionally, one of the primary rRNA binding proteins, it binds directly to 16S rRNA where it nucleates assembly of the head domain of the 30S subunit. Is located at the subunit interface close to the decoding center, probably blocks exit of the E-site tRNA. In Streptomyces coelicolor (strain ATCC BAA-471 / A3(2) / M145), this protein is Small ribosomal subunit protein uS7 (rspG).